The chain runs to 197 residues: Probable nicotinate-nucleotide adenylyltransferase (197 aa).

This sequence belongs to the NadD family.

The catalysed reaction is nicotinate beta-D-ribonucleotide + ATP + H(+) = deamido-NAD(+) + diphosphate. It participates in cofactor biosynthesis; NAD(+) biosynthesis; deamido-NAD(+) from nicotinate D-ribonucleotide: step 1/1. Functionally, catalyzes the reversible adenylation of nicotinate mononucleotide (NaMN) to nicotinic acid adenine dinucleotide (NaAD). In Chlorobium phaeobacteroides (strain DSM 266 / SMG 266 / 2430), this protein is Probable nicotinate-nucleotide adenylyltransferase.